The primary structure comprises 217 residues: uncharacterized protein (217 aa).

Over residues 59–76 (AQSTIQRTSSLPVPSSSN) the composition is skewed to polar residues. 2 disordered regions span residues 59–105 (AQST…ETAN) and 124–217 (KKSL…HISK). A Phosphoserine modification is found at S68. Phosphothreonine is present on T92. Over residues 124-135 (KKSLERRVREEQ) the composition is skewed to basic and acidic residues. Acidic residues predominate over residues 136 to 147 (EEKTDNEDDNDV). A compositionally biased stretch (polar residues) spans 148-157 (EISTQESLEN). The span at 173 to 188 (LEDDIEGQEFSFDDQD) shows a compositional bias: acidic residues. The span at 199–217 (WLSSQKQQGSPLTSDHISK) shows a compositional bias: polar residues.

This is an uncharacterized protein from Schizosaccharomyces pombe (strain 972 / ATCC 24843) (Fission yeast).